The primary structure comprises 368 residues: RNA polymerase sigma factor SigA (368 aa).

The interval Val60–Asp86 is disordered. Basic and acidic residues predominate over residues Pro67–Ala84. The tract at residues Leu135–Thr205 is sigma-70 factor domain-2. The Interaction with polymerase core subunit RpoC signature appears at Asp159–Gln162. The segment at Glu214–His290 is sigma-70 factor domain-3. The interval Val303 to His356 is sigma-70 factor domain-4. The segment at residues Leu329–Ala348 is a DNA-binding region (H-T-H motif).

Belongs to the sigma-70 factor family. RpoD/SigA subfamily. As to quaternary structure, interacts transiently with the RNA polymerase catalytic core.

The protein resides in the cytoplasm. Its function is as follows. Sigma factors are initiation factors that promote the attachment of RNA polymerase to specific initiation sites and are then released. This sigma factor is the primary sigma factor during exponential growth. In Enterococcus faecalis (strain ATCC 700802 / V583), this protein is RNA polymerase sigma factor SigA.